Consider the following 188-residue polypeptide: MAPTMLVLLVPPFPVARGLLRNCWKQLQGKLLQSRPGFSSPPWGPALAVQGPAIFSEPTNDTSGSTETSSLLDSIFWMAAPKNRRSIEVNRCRRRNPHKLIKVKNNIDFCPECGHLKQKHVLCGYCYEKVRKETAEIRRQIGKQEGGPFKAPTVETVVLYSGETPSEHDQGKRIIERERKRPSWFTQN.

The Zn(2+) site is built by C110, C113, C123, and C126. The segment at 162 to 188 is disordered; the sequence is GETPSEHDQGKRIIERERKRPSWFTQN. Basic and acidic residues predominate over residues 165–181; that stretch reads PSEHDQGKRIIERERKR.

Belongs to the bacterial ribosomal protein bL32 family. Component of the mitochondrial ribosome large subunit (39S) which comprises a 16S rRNA and about 50 distinct proteins. Post-translationally, MRPL32 precursor is processed by the m-AAA protease (composed of AFG3L2 and SPG7), which cleaves the N-terminal transit peptide. Cleavage by the m-AAA protease takes place prior to assembly into the large subunit, an essential step for mitochondrial ribosome (mitoribosome) assembly. Proper processing by the m-AAA protease is dependent on the zinc-binding region within the tightly folded C-terminal domain of MRPL32: zinc-dependent folding halts degradation initiated from the N-terminus and triggers the release of mature MRPL32.

The protein localises to the mitochondrion. In terms of biological role, component of the mitochondrial large ribosomal subunit (mt-LSU). The mitochondrial ribosome (mitoribosome) is a large ribonucleoprotein complex responsible for the synthesis of proteins inside mitochondria. The polypeptide is Large ribosomal subunit protein bL32m (MRPL32) (Bos taurus (Bovine)).